We begin with the raw amino-acid sequence, 310 residues long: MERGMTDIETAETPATHSGFVALIGAPNAGKSTLVNQLVGAKVSIVTHKVQTTRAIVRGIATHDNAQIVFVDTPGIFKPKRRLDTAMVTTAWGGAKDADIVLLLIDAERGIRGDADAILERLKDVRQPMALILNKVDRVKHETLLALSAAANEKVPFKRTFMVSALTGSGCKDLLDYLAQALPAGPWYYPEDQISDLPMRQLAAEITREKLYLRLHQELPYSSHIETEKWEEKPDGSVRIDQTIYVERDSQKKIVLGHKGETIRAIGQAARMEIAGILEQKVHLFLFVKVRENWGDDPERYREMGLEFPH.

One can recognise an Era-type G domain in the interval 17–184; that stretch reads HSGFVALIGA…LDYLAQALPA (168 aa). The interval 25–32 is G1; the sequence is GAPNAGKS. 25 to 32 is a GTP binding site; sequence GAPNAGKS. The segment at 51 to 55 is G2; the sequence is QTTRA. Residues 72 to 75 form a G3 region; sequence DTPG. GTP contacts are provided by residues 72–76 and 134–137; these read DTPGI and NKVD. The tract at residues 134-137 is G4; that stretch reads NKVD. Residues 163–165 form a G5 region; that stretch reads VSA. The region spanning 215–292 is the KH type-2 domain; that stretch reads LHQELPYSSH…HLFLFVKVRE (78 aa).

Belongs to the TRAFAC class TrmE-Era-EngA-EngB-Septin-like GTPase superfamily. Era GTPase family. In terms of assembly, monomer.

The protein localises to the cytoplasm. It localises to the cell inner membrane. Its function is as follows. An essential GTPase that binds both GDP and GTP, with rapid nucleotide exchange. Plays a role in 16S rRNA processing and 30S ribosomal subunit biogenesis and possibly also in cell cycle regulation and energy metabolism. The polypeptide is GTPase Era (Mesorhizobium japonicum (strain LMG 29417 / CECT 9101 / MAFF 303099) (Mesorhizobium loti (strain MAFF 303099))).